Consider the following 386-residue polypeptide: Succinate--CoA ligase [ADP-forming] subunit beta (386 aa).

The 236-residue stretch at 9–244 (KAVLRSYGVS…LDEEDSKEIE (236 aa)) folds into the ATP-grasp domain. Residues Lys46, 53-55 (GRG), Glu99, Cys102, and Glu107 each bind ATP. 2 residues coordinate Mg(2+): Asn199 and Asp213. Residues Asn264 and 321 to 323 (GIM) each bind substrate.

It belongs to the succinate/malate CoA ligase beta subunit family. In terms of assembly, heterotetramer of two alpha and two beta subunits. Mg(2+) serves as cofactor.

It carries out the reaction succinate + ATP + CoA = succinyl-CoA + ADP + phosphate. The catalysed reaction is GTP + succinate + CoA = succinyl-CoA + GDP + phosphate. The protein operates within carbohydrate metabolism; tricarboxylic acid cycle; succinate from succinyl-CoA (ligase route): step 1/1. Succinyl-CoA synthetase functions in the citric acid cycle (TCA), coupling the hydrolysis of succinyl-CoA to the synthesis of either ATP or GTP and thus represents the only step of substrate-level phosphorylation in the TCA. The beta subunit provides nucleotide specificity of the enzyme and binds the substrate succinate, while the binding sites for coenzyme A and phosphate are found in the alpha subunit. The polypeptide is Succinate--CoA ligase [ADP-forming] subunit beta (Bacillus cereus (strain ATCC 14579 / DSM 31 / CCUG 7414 / JCM 2152 / NBRC 15305 / NCIMB 9373 / NCTC 2599 / NRRL B-3711)).